A 553-amino-acid polypeptide reads, in one-letter code: Protein TIC 55, chloroplastic (553 aa).

The transit peptide at 1-60 directs the protein to the chloroplast; that stretch reads MALALASANSFLLPTKTHFALHVSPPPSKKTLLCTNPSSNFSFNKALSSRRRKQAWCVAA. Over 61 to 492 the chain is Stromal; sequence AADVKDATLL…GCSSAIKAFQ (432 aa). The Rieske domain occupies 103–208; the sequence is WYPLYLTKNV…VRDSQGVLWV (106 aa). Cysteine 144, histidine 146, cysteine 163, and histidine 166 together coordinate [2Fe-2S] cluster. Fe cation is bound by residues histidine 257 and histidine 262. Residues 493–513 traverse the membrane as a helical segment; the sequence is IWKNVLSGVVVALAALAILVS. The Chloroplast intermembrane segment spans residues 514 to 518; the sequence is GRQWK. The helical transmembrane segment at 519 to 539 threads the bilayer; that stretch reads VLLLASASLCSVGVYACSTAI. At 540–553 the chain is on the stromal side; sequence AMNTTNFIRVHRRL.

As to quaternary structure, part of the Tic complex. Interacts with TIC62 and TIC110. [2Fe-2S] cluster serves as cofactor.

The protein localises to the plastid. The protein resides in the chloroplast inner membrane. In terms of biological role, involved in protein precursor import into chloroplasts. Part of the redox regulon consisting of TIC32, TIC 55 and TIC62. This chain is Protein TIC 55, chloroplastic (TIC55), found in Pisum sativum (Garden pea).